The following is a 205-amino-acid chain: Methyltransferase-like 26 B (205 aa).

This sequence belongs to the UPF0585 family.

This is Methyltransferase-like 26 B from Danio rerio (Zebrafish).